We begin with the raw amino-acid sequence, 241 residues long: Uridylate kinase (241 aa).

14 to 17 (KLSG) is a binding site for ATP. UMP is bound at residue Gly-56. Gly-57 and Arg-61 together coordinate ATP. UMP contacts are provided by residues Asp-77 and 138 to 145 (TGNPFFTT). The ATP site is built by Thr-165, Tyr-171, and Asp-174.

Belongs to the UMP kinase family. In terms of assembly, homohexamer.

It localises to the cytoplasm. It catalyses the reaction UMP + ATP = UDP + ADP. It participates in pyrimidine metabolism; CTP biosynthesis via de novo pathway; UDP from UMP (UMPK route): step 1/1. Inhibited by UTP. Its function is as follows. Catalyzes the reversible phosphorylation of UMP to UDP. This chain is Uridylate kinase, found in Psychrobacter cryohalolentis (strain ATCC BAA-1226 / DSM 17306 / VKM B-2378 / K5).